The sequence spans 113 residues: Iron-sulfur cluster insertion protein ErpA (113 aa).

The iron-sulfur cluster site is built by cysteine 41, cysteine 105, and cysteine 107.

This sequence belongs to the HesB/IscA family. As to quaternary structure, homodimer. Iron-sulfur cluster serves as cofactor.

In terms of biological role, required for insertion of 4Fe-4S clusters for at least IspG. The polypeptide is Iron-sulfur cluster insertion protein ErpA (Vibrio vulnificus (strain CMCP6)).